The following is a 404-amino-acid chain: G1/S-specific cyclin-E2 (404 aa).

The disordered stretch occupies residues 1-41; that stretch reads MSRRSSRLQAKQHAQPNQPDSPQETQIIQAKKRKTAQDVKK. A compositionally biased stretch (polar residues) spans 7 to 28; the sequence is RLQAKQHAQPNQPDSPQETQII. Serine 21 carries the phosphoserine modification. Lysine 348 carries the N6-lactoyllysine modification. A Phosphoserine modification is found at serine 383. A Phosphothreonine modification is found at threonine 392.

The protein belongs to the cyclin family. Cyclin E subfamily. In terms of assembly, interacts with the CDK2 (in vivo) and CDK3 (in vitro) protein kinases to form a serine/threonine kinase holoenzyme complex. The cyclin subunit imparts substrate specificity to the complex. In terms of processing, phosphorylation by CDK2 triggers its release from CDK2 and degradation via the ubiquitin proteasome pathway. Lactylated at Lys-348. Delactylated by SIRT3. Highest levels in adult testis, thymus and brain. Lower levels in placenta, spleen and colon.

It localises to the nucleus. Its function is as follows. Essential for the control of the cell cycle at the late G1 and early S phase. The chain is G1/S-specific cyclin-E2 (Ccne2) from Mus musculus (Mouse).